Consider the following 273-residue polypeptide: DnaJ homolog subfamily C member 27 (273 aa).

The segment at 1–18 is required for interaction with MAPK1; that stretch reads MESNVPKRKEPLKSLRIK. GTP-binding positions include 23–30, 71–75, and 134–137; these read GNAEVGKS, DMAGH, and NKID. A J domain is found at 217-273; it reads DSWEMLGVRPGASREEVNKAYRKLAVLLHPDKCVAPGSEDAFKAVVNARTALLKNIK.

The protein belongs to the small GTPase superfamily. Rab family. In terms of assembly, interacts directly with MAPK1 (wild-type and kinase-deficient forms). Interacts directly (in GTP-bound form) with MAP2K1 (wild-type and kinase-deficient forms).

The protein resides in the nucleus. In terms of biological role, GTPase which can activate the MEK/ERK pathway and induce cell transformation when overexpressed. May act as a nuclear scaffold for MAPK1, probably by association with MAPK1 nuclear export signal leading to enhanced ERK1/ERK2 signaling. In Rattus norvegicus (Rat), this protein is DnaJ homolog subfamily C member 27 (Dnajc27).